The following is a 573-amino-acid chain: Urease subunit alpha (573 aa).

The Urease domain occupies 136-573; that stretch reads GGIDCHVHFI…LPMAQRYFLF (438 aa). Ni(2+) contacts are provided by His-141, His-143, and Lys-224. Position 224 is an N6-carboxylysine (Lys-224). His-226 is a substrate binding site. Ni(2+) contacts are provided by His-253 and His-279. The active-site Proton donor is His-327. A Ni(2+)-binding site is contributed by Asp-367.

This sequence belongs to the metallo-dependent hydrolases superfamily. Urease alpha subunit family. As to quaternary structure, heterotrimer of UreA (gamma), UreB (beta) and UreC (alpha) subunits. Three heterotrimers associate to form the active enzyme. Ni cation is required as a cofactor. Post-translationally, carboxylation allows a single lysine to coordinate two nickel ions.

Its subcellular location is the cytoplasm. The catalysed reaction is urea + 2 H2O + H(+) = hydrogencarbonate + 2 NH4(+). It participates in nitrogen metabolism; urea degradation; CO(2) and NH(3) from urea (urease route): step 1/1. The sequence is that of Urease subunit alpha from Rhodococcus opacus (strain B4).